Reading from the N-terminus, the 680-residue chain is Oligopeptidase A (680 aa).

His-469 lines the Zn(2+) pocket. Residue Glu-470 is part of the active site. The Zn(2+) site is built by His-473 and His-476.

It belongs to the peptidase M3 family. Zn(2+) is required as a cofactor.

It carries out the reaction Hydrolysis of oligopeptides, with broad specificity. Gly or Ala commonly occur as P1 or P1' residues, but more distant residues are also important, as is shown by the fact that Z-Gly-Pro-Gly-|-Gly-Pro-Ala is cleaved, but not Z-(Gly)(5).. May play a specific role in the degradation of signal peptides after they are released from precursor forms of secreted proteins. Can cleave N-acetyl-L-Ala(4). This Salmonella typhimurium (strain LT2 / SGSC1412 / ATCC 700720) protein is Oligopeptidase A (prlC).